A 399-amino-acid chain; its full sequence is 4-hydroxy-3-methylbut-2-enyl diphosphate reductase (399 aa).

Residue Cys-66 participates in [4Fe-4S] cluster binding. His-96 lines the (2E)-4-hydroxy-3-methylbut-2-enyl diphosphate pocket. His-96 lines the dimethylallyl diphosphate pocket. His-96 is a binding site for isopentenyl diphosphate. Cys-157 lines the [4Fe-4S] cluster pocket. His-185 serves as a coordination point for (2E)-4-hydroxy-3-methylbut-2-enyl diphosphate. Position 185 (His-185) interacts with dimethylallyl diphosphate. His-185 provides a ligand contact to isopentenyl diphosphate. Glu-187 functions as the Proton donor in the catalytic mechanism. Residue Thr-250 coordinates (2E)-4-hydroxy-3-methylbut-2-enyl diphosphate. [4Fe-4S] cluster is bound at residue Cys-288. (2E)-4-hydroxy-3-methylbut-2-enyl diphosphate is bound by residues Ser-317, Ser-318, Asn-319, and Ser-380. The dimethylallyl diphosphate site is built by Ser-317, Ser-318, Asn-319, and Ser-380. The isopentenyl diphosphate site is built by Ser-317, Ser-318, Asn-319, and Ser-380.

This sequence belongs to the IspH family. It depends on [4Fe-4S] cluster as a cofactor.

The enzyme catalyses isopentenyl diphosphate + 2 oxidized [2Fe-2S]-[ferredoxin] + H2O = (2E)-4-hydroxy-3-methylbut-2-enyl diphosphate + 2 reduced [2Fe-2S]-[ferredoxin] + 2 H(+). It carries out the reaction dimethylallyl diphosphate + 2 oxidized [2Fe-2S]-[ferredoxin] + H2O = (2E)-4-hydroxy-3-methylbut-2-enyl diphosphate + 2 reduced [2Fe-2S]-[ferredoxin] + 2 H(+). It functions in the pathway isoprenoid biosynthesis; dimethylallyl diphosphate biosynthesis; dimethylallyl diphosphate from (2E)-4-hydroxy-3-methylbutenyl diphosphate: step 1/1. It participates in isoprenoid biosynthesis; isopentenyl diphosphate biosynthesis via DXP pathway; isopentenyl diphosphate from 1-deoxy-D-xylulose 5-phosphate: step 6/6. Functionally, catalyzes the conversion of 1-hydroxy-2-methyl-2-(E)-butenyl 4-diphosphate (HMBPP) into a mixture of isopentenyl diphosphate (IPP) and dimethylallyl diphosphate (DMAPP). Acts in the terminal step of the DOXP/MEP pathway for isoprenoid precursor biosynthesis. The chain is 4-hydroxy-3-methylbut-2-enyl diphosphate reductase from Parasynechococcus marenigrum (strain WH8102).